The sequence spans 484 residues: ETS translocation variant 4 (484 aa).

Lys-6 participates in a covalent cross-link: Glycyl lysine isopeptide (Lys-Gly) (interchain with G-Cter in SUMO2). A disordered region spans residues 90–115 (SPTTRIKKEPQSPRTDPALSCSRKPP). A Glycyl lysine isopeptide (Lys-Gly) (interchain with G-Cter in SUMO) cross-link involves residue Lys-96. Ser-101 is modified (phosphoserine). Lys-139 is covalently cross-linked (Glycyl lysine isopeptide (Lys-Gly) (interchain with G-Cter in SUMO2)). 3 positions are modified to phosphoserine: Ser-140, Ser-149, and Ser-214. Glycyl lysine isopeptide (Lys-Gly) (interchain with G-Cter in SUMO) cross-links involve residues Lys-226 and Lys-260. A Glycyl lysine isopeptide (Lys-Gly) (interchain with G-Cter in SUMO2) cross-link involves residue Lys-322. The ETS DNA-binding region spans 341–421 (LQLWQFLVAL…AGERYVYKFV (81 aa)).

It belongs to the ETS family. In terms of processing, sumoylated; enhanced upon ERK/MAP kinase pathway activation, it positively regulates the transcriptional activator capacity. Sumoylation at Lys-96 probably requires phosphorylation at Ser-101. Transiently polysumoylated and desumoylated by SENP1. Sumoylation is a prerequisite to polyubiquitination which in turn increases proteasomal-mediated degradation. Probably polyubiquitinated by RNF4 and deubiquitinated by USP2. In terms of tissue distribution, expressed in keratinocytes.

It is found in the nucleus. In terms of biological role, transcriptional activator. May play a role in keratinocyte differentiation. (Microbial infection) Binds to the enhancer of the adenovirus E1A gene and acts as a transcriptional activator; the core-binding sequence is 5'-[AC]GGA[AT]GT-3'. This Homo sapiens (Human) protein is ETS translocation variant 4 (ETV4).